The primary structure comprises 64 residues: Large ribosomal subunit protein bL35 (64 aa).

This sequence belongs to the bacterial ribosomal protein bL35 family.

The chain is Large ribosomal subunit protein bL35 from Pelodictyon phaeoclathratiforme (strain DSM 5477 / BU-1).